A 145-amino-acid polypeptide reads, in one-letter code: Antiholin-like protein LrgA (145 aa).

Helical transmembrane passes span 10–30, 33–53, 72–92, and 96–116; these read PAHFFHQVIVIALVLFVSKII, FMPIPMPASVIGLVLLFVLLC, NIGLLFVPAGISVVNSLGVIS, and FLIIGLIIVSTILLLICTGYV.

The protein belongs to the CidA/LrgA family. LrgA subfamily.

The protein resides in the cell membrane. Inhibits the expression or activity of extracellular murein hydrolases by interacting, possibly with LrgB, with the holin-like proteins CidA and/or CidB. The LrgAB and CidAB proteins may affect the proton motive force of the membrane. May be involved in programmed cell death (PCD), possibly triggering PCD in response to antibiotics and environmental stresses. The protein is Antiholin-like protein LrgA of Staphylococcus aureus (strain JH1).